Here is a 162-residue protein sequence, read N- to C-terminus: Iron-sulfur cluster assembly protein IscU (162 aa).

The protein belongs to the NifU family. In terms of assembly, homotrimer. Small proportion is monomeric. Interacts with IscS. Interacts with ABCB6. Component of a complex, at least composed of IscS, Isd11 and IscU. [4Fe-4S] cluster serves as cofactor.

It localises to the mitochondrion. It participates in cofactor biosynthesis; iron-sulfur cluster biosynthesis. In terms of biological role, participates in iron-sulfur cluster formation (ISC) pathway for iron-sulfur (Fe-S) cluster biogenesis. Plays a role of a major scaffold protein for [Fe-S] assembly; assembles [4Fe-4S] clusters directly upon interaction with the catalytic component IscS-Isd11 as part of the scaffold complex. Can transfer [4Fe-4S] clusters to target apo-proteins. The chain is Iron-sulfur cluster assembly protein IscU from Plasmodium falciparum (isolate 3D7).